We begin with the raw amino-acid sequence, 509 residues long: Heat shock 70 kDa protein 14 (509 aa).

This sequence belongs to the heat shock protein 70 family. In terms of assembly, component of ribosome-associated complex (RAC), a heterodimer composed of Hsp70/DnaK-type chaperone HSPA14 and Hsp40/DnaJ-type chaperone DNAJC2.

The protein resides in the cytoplasm. It is found in the cytosol. Functionally, component of the ribosome-associated complex (RAC), a complex involved in folding or maintaining nascent polypeptides in a folding-competent state. In the RAC complex, binds to the nascent polypeptide chain, while DNAJC2 stimulates its ATPase activity. The protein is Heat shock 70 kDa protein 14 (HSPA14) of Homo sapiens (Human).